A 94-amino-acid chain; its full sequence is Small ribosomal subunit protein bS18 (94 aa).

Over residues 1-12 the composition is skewed to low complexity; sequence MSEQNSRPQNSE. Positions 1–29 are disordered; sequence MSEQNSRPQNSERPQRSRRPQGGPRRRRK. Positions 16 to 29 are enriched in basic residues; sequence RSRRPQGGPRRRRK.

The protein belongs to the bacterial ribosomal protein bS18 family. As to quaternary structure, part of the 30S ribosomal subunit. Forms a tight heterodimer with protein bS6.

Functionally, binds as a heterodimer with protein bS6 to the central domain of the 16S rRNA, where it helps stabilize the platform of the 30S subunit. The polypeptide is Small ribosomal subunit protein bS18 (Leuconostoc citreum (strain KM20)).